The primary structure comprises 287 residues: Bifunctional protein FolD 1 (287 aa).

NADP(+) contacts are provided by residues 170–172 and serine 195; that span reads GRS.

This sequence belongs to the tetrahydrofolate dehydrogenase/cyclohydrolase family. As to quaternary structure, homodimer.

It catalyses the reaction (6R)-5,10-methylene-5,6,7,8-tetrahydrofolate + NADP(+) = (6R)-5,10-methenyltetrahydrofolate + NADPH. The enzyme catalyses (6R)-5,10-methenyltetrahydrofolate + H2O = (6R)-10-formyltetrahydrofolate + H(+). It participates in one-carbon metabolism; tetrahydrofolate interconversion. Catalyzes the oxidation of 5,10-methylenetetrahydrofolate to 5,10-methenyltetrahydrofolate and then the hydrolysis of 5,10-methenyltetrahydrofolate to 10-formyltetrahydrofolate. This is Bifunctional protein FolD 1 from Streptomyces avermitilis (strain ATCC 31267 / DSM 46492 / JCM 5070 / NBRC 14893 / NCIMB 12804 / NRRL 8165 / MA-4680).